A 511-amino-acid polypeptide reads, in one-letter code: Histidine ammonia-lyase (511 aa).

Residues 143 to 145 (ASG) constitute a cross-link (5-imidazolinone (Ala-Gly)). S144 is modified (2,3-didehydroalanine (Ser)).

This sequence belongs to the PAL/histidase family. Post-translationally, contains an active site 4-methylidene-imidazol-5-one (MIO), which is formed autocatalytically by cyclization and dehydration of residues Ala-Ser-Gly.

It localises to the cytoplasm. It catalyses the reaction L-histidine = trans-urocanate + NH4(+). The protein operates within amino-acid degradation; L-histidine degradation into L-glutamate; N-formimidoyl-L-glutamate from L-histidine: step 1/3. The sequence is that of Histidine ammonia-lyase from Idiomarina loihiensis (strain ATCC BAA-735 / DSM 15497 / L2-TR).